We begin with the raw amino-acid sequence, 297 residues long: MTEKQFRSGFVSIIGRPNVGKSTLLNRILGDKIVITSDKPQTTRNRIQGIHNLPGCQMVFIDTPGIHRAKSKLNKYMVDVALSSIKEVDVILFLVEADAKPANQEGMILELLANADAPVLLVINKIDLVAKEALLERIAAYAALYPFREIVPVSALSGDGVERLVEVVHGFIPAGPPYFPDDILTDLPERFIVAEMIREKIFRLTHDEVPYSVAVVVESFKERADGLVSIAAAINVERESQKGIVIGKKGEMLKRIGMQARREIEELLDTKVFLELFVRVSKEWSENTRMLKEFGYE.

The Era-type G domain occupies 7–174 (RSGFVSIIGR…VEVVHGFIPA (168 aa)). The segment at 15-22 (GRPNVGKS) is G1. Residue 15-22 (GRPNVGKS) participates in GTP binding. The tract at residues 41 to 45 (QTTRN) is G2. The interval 62–65 (DTPG) is G3. GTP is bound by residues 62-66 (DTPGI) and 124-127 (NKID). The G4 stretch occupies residues 124-127 (NKID). A G5 region spans residues 153-155 (VSA). Residues 205–282 (THDEVPYSVA…FLELFVRVSK (78 aa)) form the KH type-2 domain.

This sequence belongs to the TRAFAC class TrmE-Era-EngA-EngB-Septin-like GTPase superfamily. Era GTPase family. Monomer.

It localises to the cytoplasm. It is found in the cell inner membrane. In terms of biological role, an essential GTPase that binds both GDP and GTP, with rapid nucleotide exchange. Plays a role in 16S rRNA processing and 30S ribosomal subunit biogenesis and possibly also in cell cycle regulation and energy metabolism. This chain is GTPase Era, found in Geotalea uraniireducens (strain Rf4) (Geobacter uraniireducens).